The sequence spans 499 residues: Catalase (499 aa).

Residues 1 to 25 are disordered; it reads MTDRPIMTTSAGAPIPDNQNSLTAG. A compositionally biased stretch (polar residues) spans 7 to 23; it reads MTTSAGAPIPDNQNSLT. Active-site residues include His55 and Asn127. Tyr337 serves as a coordination point for heme.

This sequence belongs to the catalase family. In terms of assembly, homotetramer. It depends on heme as a cofactor.

The protein localises to the periplasm. It catalyses the reaction 2 H2O2 = O2 + 2 H2O. Its function is as follows. Decomposes hydrogen peroxide into water and oxygen; serves to protect cells from the toxic effects of hydrogen peroxide. This Brucella abortus biovar 1 (strain 9-941) protein is Catalase (katA).